Here is a 338-residue protein sequence, read N- to C-terminus: Lumican (338 aa).

The signal sequence occupies residues 1–18; sequence MSLSAFTLFLALIGGTSG. Glutamine 19 carries the post-translational modification Pyrrolidone carboxylic acid. Tyrosine 20, tyrosine 21, tyrosine 23, and tyrosine 30 each carry sulfotyrosine. The 39-residue stretch at 28-66 folds into the LRRNT domain; it reads SIYGQSSPNCAPECNCPESYPSAMYCDELKLKSVPMVPP. 10 LRR repeats span residues 67–88, 91–114, 117–137, 138–159, 160–181, 185–205, 206–227, 230–253, 255–276, and 277–296; these read GIKY…AFEN, DLQW…VFSK, QLKK…PLPK, SLED…EGLV, NLTF…AAFK, SLEY…GLPV, SLLT…YFKR, ALQY…SFNV, SLVE…NENL, and ENYY…SFCK. Asparagine 88 carries an N-linked (GlcNAc...) (keratan sulfate) asparagine glycan. A glycan (N-linked (GlcNAc...) (keratan sulfate) asparagine) is linked at asparagine 127. A glycan (N-linked (GlcNAc...) (keratan sulfate) asparagine) is linked at asparagine 160. N-linked (GlcNAc...) (keratan sulfate) asparagine glycosylation is present at asparagine 252. The cysteines at positions 295 and 328 are disulfide-linked. Phosphoserine is present on serine 304. An LRR 11 repeat occupies 305–326; sequence KIKHLRLDGNRISETSLPPDMY.

This sequence belongs to the small leucine-rich proteoglycan (SLRP) family. SLRP class II subfamily. Binds to laminin. In terms of processing, sulfated on tyrosine residue(s). Post-translationally, contains keratan sulfate. In terms of tissue distribution, cornea and other tissues.

It is found in the secreted. Its subcellular location is the extracellular space. The protein localises to the extracellular matrix. This Homo sapiens (Human) protein is Lumican (LUM).